A 227-amino-acid chain; its full sequence is MFS-type transporter FVEG_08288 (227 aa).

Residues 8–28 (VFLTVLIAIASCSVYILNIAI) form a helical membrane-spanning segment. Asn-40 carries N-linked (GlcNAc...) asparagine glycosylation. A run of 5 helical transmembrane segments spans residues 43–63 (TVGL…MAGG), 100–120 (VANT…YYGV), 122–142 (FMVP…HFTL), 164–181 (FVRN…APWM), and 188–208 (YMMT…IWLI).

This sequence belongs to the major facilitator superfamily.

The protein localises to the membrane. Its function is as follows. MFS-type transporter; part of the Fusarium detoxification of benzoxazolinone cluster 1 (FDB1) involved in the degradation of benzoxazolinones produced by the host plant. Maize, wheat, and rye produce the 2 benzoxazinone phytoanticipins 2,4-dihy-droxy-7-methoxy-1,4-benzoxazin-3-one (DIMBOA) and 2,4-dihydroxy-1,4-benzoxazin-3-one (DIBOA) that, due to their inherent instability once released, spontaneously degrade to the more stable corresponding benzoxazolinones, 6-methoxy-2-benzoxazolinone (MBOA) and 2-benzoxazolinone (BOA), respectively. The chain is MFS-type transporter FVEG_08288 from Gibberella moniliformis (strain M3125 / FGSC 7600) (Maize ear and stalk rot fungus).